Consider the following 176-residue polypeptide: uncharacterized protein (176 aa).

An N-terminal signal peptide occupies residues 1-22 (MKYNNIIFLGLCLGLTTYSALS). The cysteines at positions 38 and 78 are disulfide-linked.

It belongs to the fimbrial protein family.

The protein resides in the fimbrium. This is an uncharacterized protein from Escherichia coli (strain K12).